Here is a 330-residue protein sequence, read N- to C-terminus: Fructose-1,6-bisphosphatase class 1 (330 aa).

4 residues coordinate Mg(2+): Glu78, Asp97, Leu99, and Asp100. Residues 100–103 and Asn188 each bind substrate; that span reads DGSS. Mg(2+) is bound at residue Glu260.

This sequence belongs to the FBPase class 1 family. As to quaternary structure, homotetramer. Mg(2+) serves as cofactor.

The protein localises to the cytoplasm. The enzyme catalyses beta-D-fructose 1,6-bisphosphate + H2O = beta-D-fructose 6-phosphate + phosphate. The protein operates within carbohydrate biosynthesis; gluconeogenesis. The sequence is that of Fructose-1,6-bisphosphatase class 1 from Paracoccus denitrificans (strain Pd 1222).